Consider the following 159-residue polypeptide: Succinate dehydrogenase [ubiquinone] cytochrome b small subunit, mitochondrial (159 aa).

The N-terminal 56 residues, 1–56, are a transit peptide targeting the mitochondrion; that stretch reads MAVLLKLGVLCSGQGARALSLRSRAVRPAFVSAFLQDQPTPGWRGTQHIHLSPSHQ. Residues 57–63 lie on the Mitochondrial matrix side of the membrane; the sequence is SGSKAAS. A helical transmembrane segment spans residues 64 to 85; sequence LHWTSERVVSVLLLGLIPAGYL. Topologically, residues 86–90 are mitochondrial intermembrane; the sequence is NPCSV. A helical membrane pass occupies residues 91-111; that stretch reads VDYSLAAALTLHSHWGIGQVV. Position 102 (histidine 102) interacts with heme b. Topologically, residues 112-120 are mitochondrial matrix; the sequence is TDYVHGDAL. Tyrosine 114 provides a ligand contact to a ubiquinone. The chain crosses the membrane as a helical span at residues 121–142; the sequence is QKATKAGLLAVSALTFAGLCYF. Topologically, residues 143–159 are mitochondrial intermembrane; that stretch reads NYHDVGICRAVAMLWKL.

Belongs to the CybS family. In terms of assembly, component of complex II composed of four subunits: the flavoprotein (FP) SDHA, iron-sulfur protein (IP) SDHB, and a cytochrome b560 composed of SDHC and SDHD.

It localises to the mitochondrion inner membrane. The protein operates within carbohydrate metabolism; tricarboxylic acid cycle. Its function is as follows. Membrane-anchoring subunit of succinate dehydrogenase (SDH) that is involved in complex II of the mitochondrial electron transport chain and is responsible for transferring electrons from succinate to ubiquinone (coenzyme Q). SDH also oxidizes malate to the non-canonical enol form of oxaloacetate, enol-oxaloacetate. Enol-oxaloacetate, which is a potent inhibitor of the succinate dehydrogenase activity, is further isomerized into keto-oxaloacetate. This Rattus norvegicus (Rat) protein is Succinate dehydrogenase [ubiquinone] cytochrome b small subunit, mitochondrial (Sdhd).